The primary structure comprises 300 residues: 4-hydroxy-tetrahydrodipicolinate synthase (300 aa).

Pyruvate is bound at residue Thr-54. Residue Tyr-142 is the Proton donor/acceptor of the active site. The Schiff-base intermediate with substrate role is filled by Lys-170. Ile-212 contacts pyruvate.

Belongs to the DapA family. In terms of assembly, homotetramer; dimer of dimers.

It is found in the cytoplasm. The enzyme catalyses L-aspartate 4-semialdehyde + pyruvate = (2S,4S)-4-hydroxy-2,3,4,5-tetrahydrodipicolinate + H2O + H(+). It functions in the pathway amino-acid biosynthesis; L-lysine biosynthesis via DAP pathway; (S)-tetrahydrodipicolinate from L-aspartate: step 3/4. Its function is as follows. Catalyzes the condensation of (S)-aspartate-beta-semialdehyde [(S)-ASA] and pyruvate to 4-hydroxy-tetrahydrodipicolinate (HTPA). This Halorhodospira halophila (strain DSM 244 / SL1) (Ectothiorhodospira halophila (strain DSM 244 / SL1)) protein is 4-hydroxy-tetrahydrodipicolinate synthase.